Consider the following 419-residue polypeptide: uncharacterized protein (419 aa).

Transmembrane regions (helical) follow at residues 16–36 (IMAKSFIISTVITVLLVLVVT), 186–206 (LVYIMLFVIYFSVIMYASMIA), 235–255 (LLGIGLVGITQLAIIIGAGSL), 283–303 (VIYAVIFFLLGYFLYATLAAF), 318–338 (ITPMTLLVVAGFMIAMFGLNA), 340–360 (DAGFITVTSFIPFFTPMIMFL), and 369–389 (FWQAAVGIGITLLTIVILAVI).

This sequence to M.jannaschii MJ1024.

The protein localises to the cell membrane. This is an uncharacterized protein from Bacillus subtilis (strain 168).